The following is a 1919-amino-acid chain: Protein TIC 214 (1919 aa).

Transmembrane regions (helical) follow at residues 18 to 38 (IINS…FSIG), 67 to 87 (FITG…HLAL), 90 to 110 (PHTI…WNNH), 127 to 147 (LSIQ…HFIL), 175 to 195 (VGWL…LVWI), and 224 to 244 (IFSI…PSPI). Disordered regions lie at residues 250–375 (KETP…GKEK), 1107–1129 (IKSI…NKRS), and 1606–1636 (ELKN…RRFV). Composition is skewed to acidic residues over residues 259 to 269 (GESEEETDVEI), 278 to 288 (GESEEETDVEI), 297 to 307 (GESEEETDVEI), 316 to 328 (GESE…EIET), and 355 to 366 (EKEDPDKIDETE). The segment covering 1107–1117 (IKSITKEKKKG) has biased composition (basic residues). Positions 1606–1623 (ELKNRNQEEKEPADRGDL) are enriched in basic and acidic residues. Positions 1626 to 1636 (DAQNQGNRRFV) are enriched in polar residues.

This sequence belongs to the TIC214 family. In terms of assembly, part of the Tic complex.

It localises to the plastid. The protein localises to the chloroplast inner membrane. In terms of biological role, involved in protein precursor import into chloroplasts. May be part of an intermediate translocation complex acting as a protein-conducting channel at the inner envelope. This Panax ginseng (Korean ginseng) protein is Protein TIC 214.